The sequence spans 332 residues: Tsukubadiene synthase (332 aa).

Residues Asp75 and Glu80 each contribute to the Mg(2+) site. A DDXXXE motif motif is present at residues 75–80 (DDHLDE). Arg165 is a substrate binding site. Mg(2+) is bound by residues Ser212, Ser216, and Glu220. The short motif at 212–220 (SDLHSFQLE) is the SXXXSXXXE motif element. 298-299 (RY) serves as a coordination point for substrate.

This sequence belongs to the terpene synthase family. Mg(2+) is required as a cofactor.

The catalysed reaction is (2E,6E,10E)-geranylgeranyl diphosphate = tsukubadiene + diphosphate. Catalyzes the formation of the 5-9-5 ring skeleton (3S,6S,11R,14S)-tsukubadiene from geranylgeranyl diphosphate (GGPP) via a 1,11-cyclization and a 10Re,14Re-cyclization. This chain is Tsukubadiene synthase, found in Streptomyces tsukubensis (strain DSM 42081 / NBRC 108919 / NRRL 18488 / 9993).